A 406-amino-acid chain; its full sequence is Sorting nexin-6 (406 aa).

N-acetylmethionine is present on Met-1. Met-2 carries the N-acetylmethionine; in Sorting nexin-6, N-terminally processed modification. The interaction with PIM1 stretch occupies residues 2 to 179 (MEGLDDGPDF…NQDLSVRGKN (178 aa)). The PX domain occupies 26 to 173 (LQSDAALQVD…HVFLEYNQDL (148 aa)). Residues 41–47 (SERDRVK), 100–106 (FDASREK), and 114–117 (EGSM) contribute to the a 1,2-diacyl-sn-glycero-3-phospho-(1D-myo-inositol-4,5-bisphosphate) site. Residues Ser-116 and Ser-194 each carry the phosphoserine modification. Residues 182–199 (EKLEDFFKNMVKSADGVI) form a membrane-binding amphipathic helix region. The 204-residue stretch at 203–406 (VKDVDDFFEH…NCLAVLNGDT (204 aa)) folds into the BAR domain.

It belongs to the sorting nexin family. Forms heterodimers with BAR domain-containing sorting nexins SNX1 and SNX2. The heterodimers are proposed to self-assemble into helical arrays on the membrane to stabilize and expand local membrane curvature underlying endosomal tubule formation. Thought to be a component of the originally described retromer complex (also called SNX-BAR retromer) which is a pentamer containing the heterotrimeric retromer cargo-selective complex (CSC), also described as vacuolar protein sorting subcomplex (VPS), and a heterodimeric membrane-deforming subcomplex formed between SNX1 or SNX2 and SNX5 or SNX6 (also called SNX-BAR subcomplex); the respective CSC and SNX-BAR subcomplexes associate with low affinity. Interacts with SNX1, SNX2, VPS26A, VPS29, VPS35, TGFB receptors, BACE1, BRMS1, PIP5K1C. Interacts with DCTN1; the association with DCTN1 is involved in movement of retromer-c ontaining vesicles toward the TGN. Interacts with PIM1; translocating SNX6 to the nucleus. Interacts with CDKN1B and GIT1. In terms of processing, in vitro phosphorylated by PIM1; not affecting PIM1-dependent nuclear translocation.

It localises to the early endosome membrane. It is found in the cytoplasmic vesicle. Its subcellular location is the cytoplasm. The protein localises to the nucleus. Its function is as follows. Involved in several stages of intracellular trafficking. Interacts with membranes phosphatidylinositol 3,4-bisphosphate and/or phosphatidylinositol 4,5-bisphosphate. Acts in part as component of the retromer membrane-deforming SNX-BAR subcomplex. The SNX-BAR retromer mediates retrograde transport of cargo proteins from endosomes to the trans-Golgi network (TGN) and is involved in endosome-to-plasma membrane transport for cargo protein recycling. The SNX-BAR subcomplex functions to deform the donor membrane into a tubular profile called endosome-to-TGN transport carrier (ETC). Does not have in vitro vesicle-to-membrane remodeling activity. Involved in retrograde endosome-to-TGN transport of lysosomal enzyme receptor IGF2R. May function as link between transport vesicles and dynactin. Negatively regulates retrograde transport of BACE1 from the cell surface to the trans-Golgi network. Involved in E-cadherin sorting and degradation; inhibits PIP5K1C-mediated E-cadherin degradation. In association with GIT1 involved in EGFR degradation. Promotes lysosomal degradation of CDKN1B. May contribute to transcription regulation. This Mus musculus (Mouse) protein is Sorting nexin-6 (Snx6).